A 74-amino-acid chain; its full sequence is Translation initiation factor IF-1, chloroplastic (74 aa).

Residues 1–72 (MERQNLIEME…TKGRITYRLR (72 aa)) form the S1-like domain.

Belongs to the IF-1 family. As to quaternary structure, component of the 30S ribosomal translation pre-initiation complex which assembles on the 30S ribosome in the order IF-2 and IF-3, IF-1 and N-formylmethionyl-tRNA(fMet); mRNA recruitment can occur at any time during PIC assembly.

Its subcellular location is the plastid. It is found in the chloroplast. Its function is as follows. One of the essential components for the initiation of protein synthesis. Stabilizes the binding of IF-2 and IF-3 on the 30S subunit to which N-formylmethionyl-tRNA(fMet) subsequently binds. Helps modulate mRNA selection, yielding the 30S pre-initiation complex (PIC). Upon addition of the 50S ribosomal subunit IF-1, IF-2 and IF-3 are released leaving the mature 70S translation initiation complex. This is Translation initiation factor IF-1, chloroplastic from Mesostigma viride (Green alga).